The sequence spans 140 residues: MAMTMHVDIVSAEREIFSGTVNMLFAPAEMGEVGIMPRHTPLITRLKPGEVRLQRPEGQEDFFYVSGGLLEVQPHVVTVLADTAQRAADIDEAAALAAKQRAEEALQDREGKLDYARAQAELAEAIAQLKAIQRIRKKLG.

This sequence belongs to the ATPase epsilon chain family. As to quaternary structure, F-type ATPases have 2 components, CF(1) - the catalytic core - and CF(0) - the membrane proton channel. CF(1) has five subunits: alpha(3), beta(3), gamma(1), delta(1), epsilon(1). CF(0) has three main subunits: a, b and c.

It localises to the cell inner membrane. In terms of biological role, produces ATP from ADP in the presence of a proton gradient across the membrane. In Nitrosococcus oceani (strain ATCC 19707 / BCRC 17464 / JCM 30415 / NCIMB 11848 / C-107), this protein is ATP synthase epsilon chain.